The sequence spans 167 residues: Leukotoxin-activating lysine-acyltransferase LktC serotype A1 (167 aa).

Active-site residues include H22 and D91.

This sequence belongs to the RTX toxin acyltransferase family.

The protein localises to the cytoplasm. It carries out the reaction a fatty acyl-[ACP] + L-lysyl-[protein] = N(6)-(fatty acyl)-L-lysyl-[protein] + holo-[ACP] + H(+). Involved in fatty acylation of the protoxin (LktA) at two internal lysine residues, thereby converting it to the active toxin. This Mannheimia haemolytica (Pasteurella haemolytica) protein is Leukotoxin-activating lysine-acyltransferase LktC serotype A1 (lktC).